We begin with the raw amino-acid sequence, 107 residues long: MDLNNRLTEDEALEQAYDIFLELAADNLDPADILLFNLQFEERGGAELFDPAEDWAEHVDFDLNPDFFAEVVIGLAENEGDEITDIFARVLICREKDHKLCHILWKE.

It belongs to the putative dsDNA mimic protein family.

Functionally, may act as a double-stranded DNA (dsDNA) mimic. Probably regulates the activity of a dsDNA-binding protein. This is Putative double-stranded DNA mimic protein PC1_1990 from Pectobacterium carotovorum subsp. carotovorum (strain PC1).